The chain runs to 450 residues: V-type proton ATPase subunit H (450 aa).

The protein belongs to the V-ATPase H subunit family. V-ATPase is a heteromultimeric enzyme composed of a peripheral catalytic V1 complex (components A to H) attached to an integral membrane V0 proton pore complex (components: a, c, c', c'', d, e, f and VOA1).

It localises to the vacuole membrane. Subunit of the V1 complex of vacuolar(H+)-ATPase (V-ATPase), a multisubunit enzyme composed of a peripheral complex (V1) that hydrolyzes ATP and a membrane integral complex (V0) that translocates protons. V-ATPase is responsible for acidifying and maintaining the pH of intracellular compartments. This subunit is essential for activity, but not assembly, of the enzyme complex. This subunit is also required for silencing the ATPase activity of V-ATPase when V1 is detached from V0. This Schizosaccharomyces pombe (strain 972 / ATCC 24843) (Fission yeast) protein is V-type proton ATPase subunit H (vma13).